The following is a 359-amino-acid chain: 3-dehydroquinate synthase (359 aa).

Residues 69-74, 103-107, 127-128, Lys-140, and Lys-149 each bind NAD(+); these read DAEDGK, GAVTD, and TT. The Zn(2+) site is built by Glu-182, His-244, and His-260.

This sequence belongs to the sugar phosphate cyclases superfamily. Dehydroquinate synthase family. Requires NAD(+) as cofactor. Co(2+) serves as cofactor. Zn(2+) is required as a cofactor.

It localises to the cytoplasm. The enzyme catalyses 7-phospho-2-dehydro-3-deoxy-D-arabino-heptonate = 3-dehydroquinate + phosphate. Its pathway is metabolic intermediate biosynthesis; chorismate biosynthesis; chorismate from D-erythrose 4-phosphate and phosphoenolpyruvate: step 2/7. Catalyzes the conversion of 3-deoxy-D-arabino-heptulosonate 7-phosphate (DAHP) to dehydroquinate (DHQ). In Corynebacterium pseudotuberculosis (strain C231), this protein is 3-dehydroquinate synthase.